We begin with the raw amino-acid sequence, 671 residues long: DNA ligase (671 aa).

NAD(+)-binding positions include 34–38 (DAEYD), 83–84 (SL), and glutamate 117. Catalysis depends on lysine 119, which acts as the N6-AMP-lysine intermediate. Residues arginine 140, glutamate 177, lysine 293, and lysine 317 each coordinate NAD(+). Positions 411, 414, 429, and 434 each coordinate Zn(2+). The BRCT domain occupies 591-671 (KVGGKFTGKT…EFLQMLEGEQ (81 aa)).

The protein belongs to the NAD-dependent DNA ligase family. LigA subfamily. Requires Mg(2+) as cofactor. Mn(2+) is required as a cofactor.

The enzyme catalyses NAD(+) + (deoxyribonucleotide)n-3'-hydroxyl + 5'-phospho-(deoxyribonucleotide)m = (deoxyribonucleotide)n+m + AMP + beta-nicotinamide D-nucleotide.. Its function is as follows. DNA ligase that catalyzes the formation of phosphodiester linkages between 5'-phosphoryl and 3'-hydroxyl groups in double-stranded DNA using NAD as a coenzyme and as the energy source for the reaction. It is essential for DNA replication and repair of damaged DNA. The sequence is that of DNA ligase from Geobacter metallireducens (strain ATCC 53774 / DSM 7210 / GS-15).